The primary structure comprises 476 residues: Serine/threonine-protein kinase PknF (476 aa).

2 positions are modified to phosphothreonine; by autocatalysis: Thr-8 and Thr-13. The Protein kinase domain maps to 12–279 (FTIVRQLGSG…FARALGHRLG (268 aa)). ATP contacts are provided by residues 18–26 (LGSGGMGEV) and Lys-41. Asp-137 serves as the catalytic Proton acceptor. 3 positions are modified to phosphothreonine; by autocatalysis: Thr-173, Thr-175, and Thr-287. The residue at position 290 (Ser-290) is a Phosphoserine; by autocatalysis. Residues 332 to 376 (ADDERAAQPARTRTTTSAGTTTSVAPASTTRPAPTTPTTTGAADT) are disordered. Residues 338–376 (AQPARTRTTTSAGTTTSVAPASTTRPAPTTPTTTGAADT) are compositionally biased toward low complexity.

The protein belongs to the protein kinase superfamily. Ser/Thr protein kinase family. Post-translationally, dephosphorylated by PstP.

The enzyme catalyses L-seryl-[protein] + ATP = O-phospho-L-seryl-[protein] + ADP + H(+). The catalysed reaction is L-threonyl-[protein] + ATP = O-phospho-L-threonyl-[protein] + ADP + H(+). The sequence is that of Serine/threonine-protein kinase PknF (pknF) from Mycobacterium bovis (strain ATCC BAA-935 / AF2122/97).